We begin with the raw amino-acid sequence, 279 residues long: Thymidylate synthase (279 aa).

133–134 (RR) serves as a coordination point for dUMP. Residue cysteine 154 is the Nucleophile of the active site. Residues 178–181 (RSND), asparagine 189, and 219–221 (HIY) contribute to the dUMP site. Aspartate 181 provides a ligand contact to (6R)-5,10-methylene-5,6,7,8-tetrahydrofolate. Position 278 (alanine 278) interacts with (6R)-5,10-methylene-5,6,7,8-tetrahydrofolate.

It belongs to the thymidylate synthase family. Bacterial-type ThyA subfamily. As to quaternary structure, homodimer.

The protein localises to the cytoplasm. It carries out the reaction dUMP + (6R)-5,10-methylene-5,6,7,8-tetrahydrofolate = 7,8-dihydrofolate + dTMP. The protein operates within pyrimidine metabolism; dTTP biosynthesis. Its function is as follows. Catalyzes the reductive methylation of 2'-deoxyuridine-5'-monophosphate (dUMP) to 2'-deoxythymidine-5'-monophosphate (dTMP) while utilizing 5,10-methylenetetrahydrofolate (mTHF) as the methyl donor and reductant in the reaction, yielding dihydrofolate (DHF) as a by-product. This enzymatic reaction provides an intracellular de novo source of dTMP, an essential precursor for DNA biosynthesis. The sequence is that of Thymidylate synthase from Streptococcus pneumoniae (strain 70585).